We begin with the raw amino-acid sequence, 253 residues long: Probable U3 small nucleolar RNA-associated protein 11 (253 aa).

Positions 1-21 (MAAAFRKAVKSRQREYRERSQ) are disordered. Glycyl lysine isopeptide (Lys-Gly) (interchain with G-Cter in SUMO2) cross-links involve residues Lys74, Lys83, and Lys86. A Phosphothreonine modification is found at Thr90. Glycyl lysine isopeptide (Lys-Gly) (interchain with G-Cter in SUMO2) cross-links involve residues Lys103, Lys120, Lys143, Lys144, Lys180, Lys211, Lys218, Lys235, and Lys236. A Phosphoserine modification is found at Ser241. Lys246 is covalently cross-linked (Glycyl lysine isopeptide (Lys-Gly) (interchain with G-Cter in SUMO2)).

The protein belongs to the UTP11 family. Part of the small subunit (SSU) processome, composed of more than 70 proteins and the RNA chaperone small nucleolar RNA (snoRNA) U3.

The protein resides in the nucleus. Its subcellular location is the nucleolus. Functionally, part of the small subunit (SSU) processome, first precursor of the small eukaryotic ribosomal subunit. During the assembly of the SSU processome in the nucleolus, many ribosome biogenesis factors, an RNA chaperone and ribosomal proteins associate with the nascent pre-rRNA and work in concert to generate RNA folding, modifications, rearrangements and cleavage as well as targeted degradation of pre-ribosomal RNA by the RNA exosome. Involved in nucleolar processing of pre-18S ribosomal RNA. The sequence is that of Probable U3 small nucleolar RNA-associated protein 11 from Rattus norvegicus (Rat).